The chain runs to 942 residues: Inter alpha-trypsin inhibitor, heavy chain 4 (942 aa).

Positions 1–28 (MKSPAPAHMWNLVLFLPSLLAVLPTTTA) are cleaved as a signal peptide. A VIT domain is found at 29–148 (EKNGIDIYSL…KITFELIYQE (120 aa)). An N-linked (GlcNAc...) asparagine glycan is attached at Asn-81. The region spanning 274-457 (NVIFVIDKSG…LQLQDFYHEV (184 aa)) is the VWFA domain. 2 N-linked (GlcNAc...) asparagine glycosylation sites follow: Asn-517 and Asn-577. Positions 552 to 586 (TIQQQLEQRISASGAELEALEAQVLNLSLKYNFVT) form a coiled coil. Disordered stretches follow at residues 658–698 (RQYI…SDFS) and 726–745 (EKSK…HPQV). Residues 663–690 (PGFPGPPGPPGFPAPPGPPGFPAPPGPP) show a composition bias toward pro residues. A glycan (O-linked (GalNAc...) threonine) is linked at Thr-732. Cys-761 and Cys-937 form a disulfide bridge. N-linked (GlcNAc...) asparagine glycosylation is present at Asn-874.

Belongs to the ITIH family. In terms of assembly, interacts (via C-terminus) with DNAJC1 (via SANT 2 domain). In terms of processing, may be O-glycosylated. N-glycosylated. In terms of tissue distribution, highly expressed in liver. Weak expression in lung and heart.

The protein resides in the secreted. Functionally, type II acute-phase protein (APP) involved in inflammatory responses to trauma. May also play a role in liver development or regeneration. The protein is Inter alpha-trypsin inhibitor, heavy chain 4 (Itih4) of Mus musculus (Mouse).